Reading from the N-terminus, the 314-residue chain is Mitochondrial translation factor 2 (314 aa).

The interval 111-136 (ENSSNIYDPSSPPDSPRKQQTHLGTI) is disordered.

In terms of assembly, component of the MRH5C complex, composed of mrh5, ppr4, mtf2, and sls1. Proteins mtf2 and sls1 form a subcomplex that serves as a scaffold to bring mrh5 and ppr4 together. The MRH5C complex associates with the small subunit of the mitochondrial ribosome.

In terms of biological role, translation activation factor that as part of the MRH5C complex specifically recruits cox1 mRNA to the mitochondrial ribosome for translation initiation. The sequence is that of Mitochondrial translation factor 2 from Schizosaccharomyces pombe (strain 972 / ATCC 24843) (Fission yeast).